A 113-amino-acid chain; its full sequence is Hydrogenase maturation factor HypA (113 aa).

Ni(2+) is bound at residue histidine 2. 4 residues coordinate Zn(2+): cysteine 73, cysteine 76, cysteine 89, and cysteine 92.

Belongs to the HypA/HybF family.

In terms of biological role, involved in the maturation of [NiFe] hydrogenases. Required for nickel insertion into the metal center of the hydrogenase. This Rhodopseudomonas palustris (strain TIE-1) protein is Hydrogenase maturation factor HypA.